The chain runs to 80 residues: Styelin-C (80 aa).

A signal peptide spans 1–22 (MQMKATILIVLVALFMIQQSEA). Tryptophan 24 carries the post-translational modification 6'-bromotryptophan. At leucine 53 the chain carries Leucine amide. The propeptide at 55 to 80 (DMTDEEFQEFMQDIEQAREEELLSRQ) is removed in mature form.

It localises to the secreted. Functionally, bactericidal against several Gram-positive and Gram-negative bacteria. In Styela clava (Sea squirt), this protein is Styelin-C.